We begin with the raw amino-acid sequence, 1342 residues long: DNA-directed RNA polymerase subunit beta (1342 aa).

Belongs to the RNA polymerase beta chain family. The RNAP catalytic core consists of 2 alpha, 1 beta, 1 beta' and 1 omega subunit. When a sigma factor is associated with the core the holoenzyme is formed, which can initiate transcription.

It carries out the reaction RNA(n) + a ribonucleoside 5'-triphosphate = RNA(n+1) + diphosphate. DNA-dependent RNA polymerase catalyzes the transcription of DNA into RNA using the four ribonucleoside triphosphates as substrates. This chain is DNA-directed RNA polymerase subunit beta, found in Proteus mirabilis (strain HI4320).